The sequence spans 1369 residues: DNA-directed RNA polymerase subunit beta' (1369 aa).

Positions 1–43 (MTSSSPKTRKSSTKSKAKRGSKSKKAAEIKAVQRLSKTPPPFR) are disordered. Positions 7–24 (KTRKSSTKSKAKRGSKSK) are enriched in basic residues. Cys-253, Cys-320, Cys-327, and Cys-330 together coordinate Zn(2+). Residues 1294–1369 (TVDMPSSPVA…LQEEGLLSDE (76 aa)) form a disordered region. Residues 1342–1351 (DDELSAEDQM) are compositionally biased toward acidic residues. Residues 1357–1369 (LEGLQEEGLLSDE) are compositionally biased toward low complexity.

Belongs to the RNA polymerase beta' chain family. RpoC2 subfamily. In cyanobacteria the RNAP catalytic core is composed of 2 alpha, 1 beta, 1 beta', 1 gamma and 1 omega subunit. When a sigma factor is associated with the core the holoenzyme is formed, which can initiate transcription. It depends on Zn(2+) as a cofactor.

It carries out the reaction RNA(n) + a ribonucleoside 5'-triphosphate = RNA(n+1) + diphosphate. Functionally, DNA-dependent RNA polymerase catalyzes the transcription of DNA into RNA using the four ribonucleoside triphosphates as substrates. The polypeptide is DNA-directed RNA polymerase subunit beta' (Prochlorococcus marinus (strain NATL1A)).